We begin with the raw amino-acid sequence, 241 residues long: MSNEILIVDDEDRIRRLLKMYLERESFEIHEASNGQEAYELAMENNYACILLDLMLPEMDGIQVATKLREHKQTPIIMLTAKGEETNRVEGFESGADDYIVKPFSPREVVLRVKALLRRTQSTTVEQSEPHARDVIEFKHLEIDNDAHRVLADNQEVNLTPKEYELLIYLAKTPNKVFDREQLLKEVWHYEFYGDLRTVDTHVKRLREKLNRVSSEAAHMIQTVWGVGYKFEVKSNDEPAK.

A Response regulatory domain is found at glutamate 4–leucine 117. Aspartate 53 bears the 4-aspartylphosphate mark. Residues arginine 133–valine 233 constitute a DNA-binding region (ompR/PhoB-type).

Phosphorylated by SrrB.

It is found in the cytoplasm. In terms of biological role, member of the two-component regulatory system SrrA/SrrB, which is involved in the global regulation of staphylococcal virulence factors in response to environmental oxygen levels as well as biofilm formation. Also plays an essential role in host-derived nitric oxide resistance by regulating hmp/flavohemoglobin, an enzyme that detoxifies nitric oxide by converting it to nitrate. Functions as a transcription regulator by direct binding to promoter regions of target genes. The polypeptide is Transcriptional regulatory protein SrrA (srrA) (Staphylococcus aureus (strain NCTC 8325 / PS 47)).